Reading from the N-terminus, the 361-residue chain is Peptide chain release factor 1 (361 aa).

Gln-235 is modified (N5-methylglutamine).

The protein belongs to the prokaryotic/mitochondrial release factor family. Post-translationally, methylated by PrmC. Methylation increases the termination efficiency of RF1.

It is found in the cytoplasm. In terms of biological role, peptide chain release factor 1 directs the termination of translation in response to the peptide chain termination codons UAG and UAA. The chain is Peptide chain release factor 1 from Xanthomonas euvesicatoria pv. vesicatoria (strain 85-10) (Xanthomonas campestris pv. vesicatoria).